A 317-amino-acid chain; its full sequence is MSVRTQSSEEPAETVHRAGFACFVGRPNAGKSTLTNALVGQKVAITSNRPQTTRHTVRGIVHREDAQLILVDTPGLHKPRTLLGERLNDVVRTTWAEVDVIGFCLPANEKLGPGDRFIAKELAGIRKTPKVAIVTKTDLVDSKTLAEQLIAIDQLGKELGIAWAEIVPVSATANQQVDLLADLLTPLLPEGPALYPEGDLTDEPEQVMVAELIREAALEGVRDELPHSIAVVVEEMLPREDRPADKPLLDIHANVYIERPSQKGIIIGPKGKRLKDVGIKSRTQIEALLGTPVFLDLHVKVAKDWQRDPKQLRRLGF.

One can recognise an Era-type G domain in the interval 17-190 (RAGFACFVGR…ADLLTPLLPE (174 aa)). The segment at 25–32 (GRPNAGKS) is G1. 25–32 (GRPNAGKS) provides a ligand contact to GTP. Residues 51 to 55 (QTTRH) are G2. Residues 72-75 (DTPG) form a G3 region. Residues 72-76 (DTPGL) and 135-138 (TKTD) contribute to the GTP site. Positions 135 to 138 (TKTD) are G4. The interval 169 to 171 (VSA) is G5. One can recognise a KH type-2 domain in the interval 221–303 (VRDELPHSIA…FLDLHVKVAK (83 aa)).

Belongs to the TRAFAC class TrmE-Era-EngA-EngB-Septin-like GTPase superfamily. Era GTPase family. As to quaternary structure, monomer.

It is found in the cytoplasm. Its subcellular location is the cell membrane. An essential GTPase that binds both GDP and GTP, with rapid nucleotide exchange. Plays a role in 16S rRNA processing and 30S ribosomal subunit biogenesis and possibly also in cell cycle regulation and energy metabolism. This chain is GTPase Era, found in Streptomyces coelicolor (strain ATCC BAA-471 / A3(2) / M145).